The chain runs to 126 residues: Histone H2B type 1-B (126 aa).

Residues 1-12 (MPEPSKSAPAPK) are compositionally biased toward low complexity. Residues 1–36 (MPEPSKSAPAPKKGSKKAISKAQKKDGKKRKRSRKE) form a disordered region. N-acetylproline is present on P2. E3 is modified (ADP-ribosyl glutamic acid). At K6 the chain carries N6-(2-hydroxyisobutyryl)lysine; alternate. K6 is subject to N6-(beta-hydroxybutyryl)lysine; alternate. Residue K6 is modified to N6-acetyllysine; alternate. K6 carries the post-translational modification N6-butyryllysine; alternate. Residue K6 is modified to N6-crotonyllysine; alternate. Position 6 is an N6-lactoyllysine; alternate (K6). Residue K6 forms a Glycyl lysine isopeptide (Lys-Gly) (interchain with G-Cter in SUMO2); alternate linkage. Residue S7 is modified to ADP-ribosylserine. At K12 the chain carries N6-(beta-hydroxybutyryl)lysine; alternate. 2 positions are modified to N6-acetyllysine; alternate: K12 and K13. Residues K12 and K13 each carry the N6-crotonyllysine; alternate modification. An N6-lactoyllysine; alternate modification is found at K12. The residue at position 13 (K13) is an N6-(2-hydroxyisobutyryl)lysine; alternate. Position 15 is a phosphoserine; by STK4/MST1 (S15). 4 positions are modified to N6-acetyllysine; alternate: K16, K17, K21, and K24. Residues K16, K17, K21, and K24 each carry the N6-crotonyllysine; alternate modification. Residues K16, K17, K21, and K24 each carry the N6-lactoyllysine; alternate modification. K17 carries the post-translational modification N6-glutaryllysine; alternate. N6-(2-hydroxyisobutyryl)lysine; alternate is present on residues K21 and K24. Residue K21 is modified to N6-(beta-hydroxybutyryl)lysine; alternate. K21 is subject to N6-butyryllysine; alternate. K21 is covalently cross-linked (Glycyl lysine isopeptide (Lys-Gly) (interchain with G-Cter in SUMO2); alternate). K25 bears the N6-(2-hydroxyisobutyryl)lysine mark. K35 is modified (N6-(2-hydroxyisobutyryl)lysine; alternate). N6-(beta-hydroxybutyryl)lysine; alternate is present on K35. An N6-crotonyllysine; alternate modification is found at K35. Residue K35 is modified to N6-glutaryllysine; alternate. The residue at position 35 (K35) is an N6-succinyllysine; alternate. Residue K35 forms a Glycyl lysine isopeptide (Lys-Gly) (interchain with G-Cter in ubiquitin); alternate linkage. E36 bears the PolyADP-ribosyl glutamic acid mark. S37 bears the Phosphoserine; by AMPK mark. Residues K44, K47, and K58 each carry the N6-(2-hydroxyisobutyryl)lysine; alternate modification. K44 bears the N6-lactoyllysine; alternate mark. K44 and K47 each carry N6-glutaryllysine; alternate. K47 carries the N6-methyllysine; alternate modification. K58 is subject to N6,N6-dimethyllysine; alternate. Residue R80 is modified to Dimethylated arginine. K86 carries the N6-(2-hydroxyisobutyryl)lysine; alternate modification. K86 carries the N6-acetyllysine; alternate modification. An N6-lactoyllysine; alternate modification is found at K86. At K86 the chain carries N6,N6,N6-trimethyllysine; alternate. R87 and R93 each carry omega-N-methylarginine. K109 bears the N6-(2-hydroxyisobutyryl)lysine; alternate mark. N6-(beta-hydroxybutyryl)lysine; alternate is present on K109. The residue at position 109 (K109) is an N6-lactoyllysine; alternate. Position 109 is an N6-glutaryllysine; alternate (K109). At K109 the chain carries N6-methyllysine; alternate. S113 is a glycosylation site (O-linked (GlcNAc) serine). T116 bears the Phosphothreonine mark. N6-(2-hydroxyisobutyryl)lysine; alternate is present on residues K117 and K121. K117 carries the post-translational modification N6-(beta-hydroxybutyryl)lysine; alternate. K117 and K121 each carry N6-lactoyllysine; alternate. An N6-glutaryllysine; alternate mark is found at K117 and K121. N6-succinyllysine; alternate is present on residues K117 and K121. The residue at position 117 (K117) is an N6-methylated lysine; alternate. K121 participates in a covalent cross-link: Glycyl lysine isopeptide (Lys-Gly) (interchain with G-Cter in ubiquitin); alternate.

Belongs to the histone H2B family. In terms of assembly, the nucleosome is a histone octamer containing two molecules each of H2A, H2B, H3 and H4 assembled in one H3-H4 heterotetramer and two H2A-H2B heterodimers. The octamer wraps approximately 147 bp of DNA. Post-translationally, monoubiquitination at Lys-35 (H2BK34Ub) by the MSL1/MSL2 dimer is required for histone H3 'Lys-4' (H3K4me) and 'Lys-79' (H3K79me) methylation and transcription activation at specific gene loci, such as HOXA9 and MEIS1 loci. Similarly, monoubiquitination at Lys-121 (H2BK120Ub) by the RNF20/40 complex gives a specific tag for epigenetic transcriptional activation and is also prerequisite for histone H3 'Lys-4' and 'Lys-79' methylation. It also functions cooperatively with the FACT dimer to stimulate elongation by RNA polymerase II. H2BK120Ub also acts as a regulator of mRNA splicing: deubiquitination by USP49 is required for efficient cotranscriptional splicing of a large set of exons. In terms of processing, phosphorylated on Ser-15 (H2BS14ph) by STK4/MST1 during apoptosis; which facilitates apoptotic chromatin condensation. Also phosphorylated on Ser-15 in response to DNA double strand breaks (DSBs), and in correlation with somatic hypermutation and immunoglobulin class-switch recombination. Phosphorylation at Ser-37 (H2BS36ph) by AMPK in response to stress promotes transcription. GlcNAcylation at Ser-113 promotes monoubiquitination of Lys-121. It fluctuates in response to extracellular glucose, and associates with transcribed genes. Post-translationally, ADP-ribosylated by PARP1 or PARP2 on Ser-7 (H2BS6ADPr) in response to DNA damage. H2BS6ADPr promotes recruitment of CHD1L. Mono-ADP-ribosylated on Glu-3 (H2BE2ADPr) by PARP3 in response to single-strand breaks. Poly ADP-ribosylation on Glu-36 (H2BE35ADPr) by PARP1 regulates adipogenesis: it inhibits phosphorylation at Ser-37 (H2BS36ph), thereby blocking expression of pro-adipogenetic genes. In terms of processing, hydroxybutyrylation of histones is induced by starvation. Crotonylation (Kcr) is specifically present in male germ cells and marks testis-specific genes in post-meiotic cells, including X-linked genes that escape sex chromosome inactivation in haploid cells. Crotonylation marks active promoters and enhancers and confers resistance to transcriptional repressors. It is also associated with post-meiotically activated genes on autosomes. Post-translationally, lactylated in macrophages by EP300/P300 by using lactoyl-CoA directly derived from endogenous or exogenous lactate, leading to stimulates gene transcription.

The protein localises to the nucleus. It is found in the chromosome. Core component of nucleosome. Nucleosomes wrap and compact DNA into chromatin, limiting DNA accessibility to the cellular machineries which require DNA as a template. Histones thereby play a central role in transcription regulation, DNA repair, DNA replication and chromosomal stability. DNA accessibility is regulated via a complex set of post-translational modifications of histones, also called histone code, and nucleosome remodeling. The polypeptide is Histone H2B type 1-B (Mus musculus (Mouse)).